The following is a 476-amino-acid chain: Bifunctional protein HldE (476 aa).

Residues 1 to 319 (MKVSLPAFEK…EALALHHGES (319 aa)) form a ribokinase region. Residue 195 to 198 (NMSE) coordinates ATP. Residue aspartate 264 is part of the active site. The tract at residues 345-476 (MTNGCFDILH…AIIQNIMANQ (132 aa)) is cytidylyltransferase.

It in the N-terminal section; belongs to the carbohydrate kinase PfkB family. The protein in the C-terminal section; belongs to the cytidylyltransferase family. As to quaternary structure, homodimer.

The catalysed reaction is D-glycero-beta-D-manno-heptose 7-phosphate + ATP = D-glycero-beta-D-manno-heptose 1,7-bisphosphate + ADP + H(+). The enzyme catalyses D-glycero-beta-D-manno-heptose 1-phosphate + ATP + H(+) = ADP-D-glycero-beta-D-manno-heptose + diphosphate. Its pathway is nucleotide-sugar biosynthesis; ADP-L-glycero-beta-D-manno-heptose biosynthesis; ADP-L-glycero-beta-D-manno-heptose from D-glycero-beta-D-manno-heptose 7-phosphate: step 1/4. The protein operates within nucleotide-sugar biosynthesis; ADP-L-glycero-beta-D-manno-heptose biosynthesis; ADP-L-glycero-beta-D-manno-heptose from D-glycero-beta-D-manno-heptose 7-phosphate: step 3/4. Catalyzes the phosphorylation of D-glycero-D-manno-heptose 7-phosphate at the C-1 position to selectively form D-glycero-beta-D-manno-heptose-1,7-bisphosphate. Its function is as follows. Catalyzes the ADP transfer from ATP to D-glycero-beta-D-manno-heptose 1-phosphate, yielding ADP-D-glycero-beta-D-manno-heptose. This chain is Bifunctional protein HldE, found in Shewanella putrefaciens (strain CN-32 / ATCC BAA-453).